A 354-amino-acid polypeptide reads, in one-letter code: UDP-N-acetylglucosamine--N-acetylmuramyl-(pentapeptide) pyrophosphoryl-undecaprenol N-acetylglucosamine transferase (354 aa).

The UDP-N-acetyl-alpha-D-glucosamine site is built by Ser-196 and Gln-288.

The protein belongs to the glycosyltransferase 28 family. MurG subfamily.

The protein resides in the cell membrane. The catalysed reaction is Mur2Ac(oyl-L-Ala-gamma-D-Glu-L-Lys-D-Ala-D-Ala)-di-trans,octa-cis-undecaprenyl diphosphate + UDP-N-acetyl-alpha-D-glucosamine = beta-D-GlcNAc-(1-&gt;4)-Mur2Ac(oyl-L-Ala-gamma-D-Glu-L-Lys-D-Ala-D-Ala)-di-trans,octa-cis-undecaprenyl diphosphate + UDP + H(+). The protein operates within cell wall biogenesis; peptidoglycan biosynthesis. Functionally, cell wall formation. Catalyzes the transfer of a GlcNAc subunit on undecaprenyl-pyrophosphoryl-MurNAc-pentapeptide (lipid intermediate I) to form undecaprenyl-pyrophosphoryl-MurNAc-(pentapeptide)GlcNAc (lipid intermediate II). This is UDP-N-acetylglucosamine--N-acetylmuramyl-(pentapeptide) pyrophosphoryl-undecaprenol N-acetylglucosamine transferase from Streptococcus suis (strain 98HAH33).